An 865-amino-acid chain; its full sequence is DNA mismatch repair protein MutS (865 aa).

Residue 609-616 (GPNMAGKS) coordinates ATP.

Belongs to the DNA mismatch repair MutS family.

Functionally, this protein is involved in the repair of mismatches in DNA. It is possible that it carries out the mismatch recognition step. This protein has a weak ATPase activity. In Leuconostoc citreum (strain KM20), this protein is DNA mismatch repair protein MutS.